The sequence spans 384 residues: Epoxyqueuosine reductase (384 aa).

Asp144 serves as the catalytic Proton donor. Positions 186–218 constitute a 4Fe-4S ferredoxin-type domain; the sequence is LPLPVDQPVEEGCGKCVACMTICPTGAIVEPYT. The [4Fe-4S] cluster site is built by Cys198, Cys201, Cys204, Cys208, Cys224, Cys251, Cys254, and Cys258.

The protein belongs to the QueG family. In terms of assembly, monomer. It depends on cob(II)alamin as a cofactor. The cofactor is [4Fe-4S] cluster.

Its subcellular location is the cytoplasm. It catalyses the reaction epoxyqueuosine(34) in tRNA + AH2 = queuosine(34) in tRNA + A + H2O. The protein operates within tRNA modification; tRNA-queuosine biosynthesis. Functionally, catalyzes the conversion of epoxyqueuosine (oQ) to queuosine (Q), which is a hypermodified base found in the wobble positions of tRNA(Asp), tRNA(Asn), tRNA(His) and tRNA(Tyr). This is Epoxyqueuosine reductase from Salmonella typhimurium (strain LT2 / SGSC1412 / ATCC 700720).